Reading from the N-terminus, the 77-residue chain is MKLIIFTGLVLFGIVSLIEAQAENEKACLPQYQVCTDAPGNCCSNLVCDCYGRYKSGARIGRNCFCLQKGVIYKRED.

Residues 1–20 form the signal peptide; it reads MKLIIFTGLVLFGIVSLIEA. The propeptide occupies 21 to 26; the sequence is QAENEK.

It belongs to the neurotoxin 19 (CSTX) family. 08 (U8-Lctx) subfamily. Contains 4 disulfide bonds. In terms of tissue distribution, expressed by the venom gland.

Its subcellular location is the secreted. The protein is U8-lycotoxin-Ls1v of Lycosa singoriensis (Wolf spider).